Reading from the N-terminus, the 901-residue chain is Core protein VP3 (901 aa).

It belongs to the orbivirus VP3 family.

The protein resides in the virion. The VP3 protein is one of the five proteins (with VP1, VP4, VP6 and VP7) which form the inner capsid of the virus. The polypeptide is Core protein VP3 (Segment-3) (Bluetongue virus 10 (isolate USA) (BTV 10)).